A 443-amino-acid polypeptide reads, in one-letter code: MTHIQLDFSKTLEFFGEHELKQQQEIVKSIHKTIHEGTGAGSDFLGWVDLPVDYDKEEFSRIVEASKRIKENSDVLVVIGIGGSYLGARAAIEMLTSSFRNSNEYPEIVFVGNHLSSTYTKELVDYLADKDFSVNVISKSGTTTEPAVAFRLFKQLVEERYGKEEAQKRIFATTDKEKGALKQLATNEGYETFIVPDDVGGRYSVLTAVGLLPIATAGINIEAMMIGAAKAREELSSDKLEDNIAYQYATIRNILYAKGYTTEMLINYEPSMQYFNEWWKQLFGESEGKDFKGIYPSSANYTTDLHSLGQYVQEGRRFLFETVVKVNHPKYDITIEKDSDDLDGLNYLAGKTIDEVNTKAFEGTLLAHTDGGVPNMVVNIPQLDEETFGYVVYFFELACAMSGYQLGVNPFNQPGVEAYKQNMFALLGKPGFEDLKKELEERL.

The Proton donor role is filled by Glu285. Catalysis depends on residues His306 and Lys420.

It belongs to the GPI family.

The protein localises to the cytoplasm. The catalysed reaction is alpha-D-glucose 6-phosphate = beta-D-fructose 6-phosphate. It participates in carbohydrate biosynthesis; gluconeogenesis. Its pathway is carbohydrate degradation; glycolysis; D-glyceraldehyde 3-phosphate and glycerone phosphate from D-glucose: step 2/4. In terms of biological role, catalyzes the reversible isomerization of glucose-6-phosphate to fructose-6-phosphate. This Staphylococcus aureus (strain Mu3 / ATCC 700698) protein is Glucose-6-phosphate isomerase.